A 130-amino-acid polypeptide reads, in one-letter code: Prefoldin subunit alpha (130 aa).

It belongs to the prefoldin subunit alpha family. Heterohexamer of two alpha and four beta subunits.

It is found in the cytoplasm. Its function is as follows. Molecular chaperone capable of stabilizing a range of proteins. Seems to fulfill an ATP-independent, HSP70-like function in archaeal de novo protein folding. The polypeptide is Prefoldin subunit alpha (Thermoplasma volcanium (strain ATCC 51530 / DSM 4299 / JCM 9571 / NBRC 15438 / GSS1)).